The sequence spans 273 residues: DNA repair protein RecO (273 aa).

This sequence belongs to the RecO family.

Its function is as follows. Involved in DNA repair and RecF pathway recombination. This Saccharopolyspora erythraea (strain ATCC 11635 / DSM 40517 / JCM 4748 / NBRC 13426 / NCIMB 8594 / NRRL 2338) protein is DNA repair protein RecO.